The sequence spans 380 residues: 3-isopropylmalate dehydratase large subunit (380 aa).

[4Fe-4S] cluster is bound by residues Cys262, Cys320, and Cys323.

This sequence belongs to the aconitase/IPM isomerase family. LeuC type 2 subfamily. In terms of assembly, heterodimer of LeuC and LeuD. It depends on [4Fe-4S] cluster as a cofactor.

The enzyme catalyses (2R,3S)-3-isopropylmalate = (2S)-2-isopropylmalate. The protein operates within amino-acid biosynthesis; L-leucine biosynthesis; L-leucine from 3-methyl-2-oxobutanoate: step 2/4. Its function is as follows. Catalyzes the isomerization between 2-isopropylmalate and 3-isopropylmalate, via the formation of 2-isopropylmaleate. In Pyrococcus horikoshii (strain ATCC 700860 / DSM 12428 / JCM 9974 / NBRC 100139 / OT-3), this protein is 3-isopropylmalate dehydratase large subunit.